A 111-amino-acid polypeptide reads, in one-letter code: Large ribosomal subunit protein uL22 (111 aa).

This sequence belongs to the universal ribosomal protein uL22 family. In terms of assembly, part of the 50S ribosomal subunit.

This protein binds specifically to 23S rRNA; its binding is stimulated by other ribosomal proteins, e.g. L4, L17, and L20. It is important during the early stages of 50S assembly. It makes multiple contacts with different domains of the 23S rRNA in the assembled 50S subunit and ribosome. Its function is as follows. The globular domain of the protein is located near the polypeptide exit tunnel on the outside of the subunit, while an extended beta-hairpin is found that lines the wall of the exit tunnel in the center of the 70S ribosome. This Fusobacterium nucleatum subsp. nucleatum (strain ATCC 25586 / DSM 15643 / BCRC 10681 / CIP 101130 / JCM 8532 / KCTC 2640 / LMG 13131 / VPI 4355) protein is Large ribosomal subunit protein uL22.